Consider the following 1323-residue polypeptide: PH domain leucine-rich repeat-containing protein phosphatase 2 (1323 aa).

A PH domain is found at 150 to 248; sequence RILLSGIYNV…WQRQASKVVS (99 aa). LRR repeat units follow at residues 250–271, 273–296, 300–321, 323–344, 346–368, 369–390, 392–412, 416–439, 440–460, 461–480, 481–502, 503–524, 526–547, 549–570, 571–592, 595–616, 621–644, 645–666, 669–690, 692–713, 714–735, and 737–758; these read RISTVDLSCYSLEEVPEHLFYS, DITYLNLRHNFMQLERPGGLDTLY, QLKGLNLSHNKLGLFPILLCEI, TLTELNLSCNGFHDLPSQIGNL, NLQTLCLDGNFLTTLPEELGNLQ, QLSSLGISFNNFSQIPEVYEKL, MLDRVVMAGNCLEVLNLGVLN, HIKHVDLRMNHLKTMVIENLEGNK, HITHVDLRDNRLTDLDLSSLC, SLEQLHCGRNQLRELTLSGF, SLRTLYASSNRLTAVNVYPVPS, LLTFLDLSRNLLECVPDWACEA, KIEVLDVSYNLLTEVPVRILSS, SLRKLMLGHNHVQNLPTLVEHI, PLEVLDLQHNALTRLPDTLFSK, NLRYLNASANSLESLPSACTGE, MLQLLYLTNNLLTDQCIPVLVGHL, HLRILHLANNQLQTFPASKLNK, QLEELNLSGNKLKTIPTTIANC, RLHTLVAHSNNISIFPEILQLP, QIQFVDLSCNDLTEILIPEALP, and TLQDLDLTGNTNLVLEHKTLDI. Residues 785-1033 form the PPM-type phosphatase domain; it reads SHGLAEMAGQ…DNVGAMVVYL (249 aa). Residues D820, G821, K985, and D1024 each contribute to the Mn(2+) site. The segment at 1060-1157 is disordered; sequence TIKDAPKPAT…DSDDDQPVEG (98 aa). Residues 1071–1097 are compositionally biased toward low complexity; sequence SSSSGIASEFSSEMSTSEVSSEVGSTA. The segment covering 1122–1146 has biased composition (polar residues); that stretch reads PTPTSGLFQRQPSSATFSSNQSDNG. Residue S1210 is modified to Phosphoserine. Residues 1285–1323 are disordered; the sequence is HDLEEEVKEQMKQHQDSRLEPEPHEEDRTEPPEEFDTAL. Positions 1292-1315 are enriched in basic and acidic residues; sequence KEQMKQHQDSRLEPEPHEEDRTEP.

In terms of assembly, interacts with AKT1, AKT3 and PRKCB isoform beta-II. Interacts with STK4, RPS6KB1, RAF1. Interacts with FKBP5; FKBP5 acts as a scaffold for PHLPP2 and Akt. Interacts with NHERF1; NHERF1 scaffolds a heterotrimeric complex with PTEN. The cofactor is Mn(2+). In terms of tissue distribution, in colorectal cancer tissue, expression is highest in the surface epithelium of normal colonic mucosa adjacent to the cancer tissue but is largely excluded from the crypt bases. Expression is lost or significantly decreased in 80% of tested tumors (at protein level).

Its subcellular location is the cytoplasm. It is found in the membrane. The protein resides in the nucleus. The enzyme catalyses O-phospho-L-seryl-[protein] + H2O = L-seryl-[protein] + phosphate. It carries out the reaction O-phospho-L-threonyl-[protein] + H2O = L-threonyl-[protein] + phosphate. Inhibited by AKT1, AKT2 and AKT3. Activated by oleic acid and arachidonic acid. Functionally, protein phosphatase involved in regulation of Akt and PKC signaling. Mediates dephosphorylation in the C-terminal domain hydrophobic motif of members of the AGC Ser/Thr protein kinase family; specifically acts on 'Ser-473' of AKT1, 'Ser-660' of PRKCB isoform beta-II and 'Ser-657' of PRKCA. Akt regulates the balance between cell survival and apoptosis through a cascade that primarily alters the function of transcription factors that regulate pro- and antiapoptotic genes. Dephosphorylation of 'Ser-473' of Akt triggers apoptosis and decreases cell proliferation. Also controls the phosphorylation of AKT3. Dephosphorylates STK4 on 'Thr-387' leading to STK4 activation and apoptosis. Dephosphorylates RPS6KB1 and is involved in regulation of cap-dependent translation. Inhibits cancer cell proliferation and may act as a tumor suppressor. Dephosphorylation of PRKCA and PRKCB leads to their destabilization and degradation. Dephosphorylates RAF1 inhibiting its kinase activity. This chain is PH domain leucine-rich repeat-containing protein phosphatase 2 (PHLPP2), found in Homo sapiens (Human).